The sequence spans 667 residues: Transketolase (667 aa).

Residue histidine 27 participates in substrate binding. Thiamine diphosphate contacts are provided by residues histidine 67 and 115 to 117; that span reads GPL. Aspartate 156 provides a ligand contact to Mg(2+). Glycine 157 and asparagine 186 together coordinate thiamine diphosphate. 2 residues coordinate Mg(2+): asparagine 186 and isoleucine 188. Substrate-binding residues include histidine 262, arginine 357, and serine 384. Histidine 262 contributes to the thiamine diphosphate binding site. Glutamate 411 acts as the Proton donor in catalysis. Residue phenylalanine 437 participates in thiamine diphosphate binding. Histidine 461, aspartate 469, and arginine 520 together coordinate substrate.

Belongs to the transketolase family. As to quaternary structure, homodimer. Mg(2+) is required as a cofactor. Requires Ca(2+) as cofactor. Mn(2+) serves as cofactor. It depends on Co(2+) as a cofactor. The cofactor is thiamine diphosphate.

It carries out the reaction D-sedoheptulose 7-phosphate + D-glyceraldehyde 3-phosphate = aldehydo-D-ribose 5-phosphate + D-xylulose 5-phosphate. In terms of biological role, catalyzes the transfer of a two-carbon ketol group from a ketose donor to an aldose acceptor, via a covalent intermediate with the cofactor thiamine pyrophosphate. In Bacillus subtilis (strain 168), this protein is Transketolase (tkt).